Here is a 673-residue protein sequence, read N- to C-terminus: Probable boron transporter 7 (673 aa).

Residues M1–R35 lie on the Cytoplasmic side of the membrane. The chain crosses the membrane as a helical span at residues I36–E56. The Extracellular segment spans residues Q57–T75. The helical transmembrane segment at A76–A96 threads the bilayer. Topologically, residues E97–Y121 are cytoplasmic. Residues L122–L142 traverse the membrane as a helical segment. Residues N143–G160 lie on the Extracellular side of the membrane. The helical transmembrane segment at M161 to V181 threads the bilayer. Topologically, residues P182–R197 are cytoplasmic. The chain crosses the membrane as a helical span at residues Y198–S218. Topologically, residues R219 to G233 are extracellular. Residues F234–V254 form a helical membrane-spanning segment. Over P255–V289 the chain is Cytoplasmic. The helical transmembrane segment at P290–F310 threads the bilayer. Over D311–T330 the chain is Extracellular. A helical membrane pass occupies residues A331–L351. Residues P352 to S468 lie on the Cytoplasmic side of the membrane. A helical membrane pass occupies residues V469–L489. Residues W490 to G556 lie on the Extracellular side of the membrane. The chain crosses the membrane as a helical span at residues V557 to L577. Residues R578–S673 are Cytoplasmic-facing.

The protein belongs to the anion exchanger (TC 2.A.31.3) family.

Its subcellular location is the membrane. In terms of biological role, putative boron transporter. Boron is essential for maintaining the integrity of plants cell walls. The sequence is that of Probable boron transporter 7 (BOR7) from Arabidopsis thaliana (Mouse-ear cress).